A 102-amino-acid polypeptide reads, in one-letter code: Large ribosomal subunit protein uL24 (102 aa).

This sequence belongs to the universal ribosomal protein uL24 family. Part of the 50S ribosomal subunit.

Functionally, one of two assembly initiator proteins, it binds directly to the 5'-end of the 23S rRNA, where it nucleates assembly of the 50S subunit. In terms of biological role, one of the proteins that surrounds the polypeptide exit tunnel on the outside of the subunit. This chain is Large ribosomal subunit protein uL24, found in Herpetosiphon aurantiacus (strain ATCC 23779 / DSM 785 / 114-95).